A 273-amino-acid polypeptide reads, in one-letter code: Elongation factor Ts (273 aa).

The segment at 79–82 is involved in Mg(2+) ion dislocation from EF-Tu; sequence TDFV.

This sequence belongs to the EF-Ts family.

The protein localises to the cytoplasm. Associates with the EF-Tu.GDP complex and induces the exchange of GDP to GTP. It remains bound to the aminoacyl-tRNA.EF-Tu.GTP complex up to the GTP hydrolysis stage on the ribosome. The protein is Elongation factor Ts of Hydrogenobaculum sp. (strain Y04AAS1).